The following is a 339-amino-acid chain: Putative agmatine deiminase (339 aa).

Cys331 functions as the Amidino-cysteine intermediate in the catalytic mechanism.

This sequence belongs to the agmatine deiminase family.

It catalyses the reaction agmatine + H2O = N-carbamoylputrescine + NH4(+). The polypeptide is Putative agmatine deiminase (Streptomyces coelicolor (strain ATCC BAA-471 / A3(2) / M145)).